A 154-amino-acid chain; its full sequence is Major allergen Api g 1, isoallergen 1 (154 aa).

This sequence belongs to the BetVI family.

This chain is Major allergen Api g 1, isoallergen 1, found in Apium graveolens (Celery).